The following is a 250-amino-acid chain: Flavin-dependent thymidylate synthase (250 aa).

One can recognise a ThyX domain in the interval 7–233 (LRVQLIAKTD…PSIFGDFDIA (227 aa)). Residues S71, 95-97 (RHR), and Q103 contribute to the FAD site. DUMP-binding positions include 92–95 (ELIR), 103–107 (QLSQR), and R172. Positions 95 to 105 (RHRHFSYSQLS) match the ThyX motif motif. FAD-binding positions include 188–190 (NYR) and H194. Residue R199 participates in dUMP binding. R199 functions as the Involved in ionization of N3 of dUMP, leading to its activation in the catalytic mechanism.

It belongs to the thymidylate synthase ThyX family. As to quaternary structure, homotetramer. FAD is required as a cofactor.

The enzyme catalyses dUMP + (6R)-5,10-methylene-5,6,7,8-tetrahydrofolate + NADPH + H(+) = dTMP + (6S)-5,6,7,8-tetrahydrofolate + NADP(+). It participates in pyrimidine metabolism; dTTP biosynthesis. Functionally, catalyzes the reductive methylation of 2'-deoxyuridine-5'-monophosphate (dUMP) to 2'-deoxythymidine-5'-monophosphate (dTMP) while utilizing 5,10-methylenetetrahydrofolate (mTHF) as the methyl donor, and NADPH and FADH(2) as the reductant. In Mycobacteroides abscessus (strain ATCC 19977 / DSM 44196 / CCUG 20993 / CIP 104536 / JCM 13569 / NCTC 13031 / TMC 1543 / L948) (Mycobacterium abscessus), this protein is Flavin-dependent thymidylate synthase.